The chain runs to 546 residues: Chaperonin GroEL (546 aa).

Residues 30–33, Lys51, 87–91, Gly415, 478–480, and Asp494 contribute to the ATP site; these read TMGP, DGTTT, and NAA.

Belongs to the chaperonin (HSP60) family. In terms of assembly, forms a cylinder of 14 subunits composed of two heptameric rings stacked back-to-back. Interacts with the co-chaperonin GroES.

The protein localises to the cytoplasm. It carries out the reaction ATP + H2O + a folded polypeptide = ADP + phosphate + an unfolded polypeptide.. Its function is as follows. Together with its co-chaperonin GroES, plays an essential role in assisting protein folding. The GroEL-GroES system forms a nano-cage that allows encapsulation of the non-native substrate proteins and provides a physical environment optimized to promote and accelerate protein folding. The sequence is that of Chaperonin GroEL from Wolinella succinogenes (strain ATCC 29543 / DSM 1740 / CCUG 13145 / JCM 31913 / LMG 7466 / NCTC 11488 / FDC 602W) (Vibrio succinogenes).